We begin with the raw amino-acid sequence, 218 residues long: 7-cyano-7-deazaguanine synthase (218 aa).

Phe10–Leu20 serves as a coordination point for ATP. Zn(2+) is bound by residues Cys186, Cys195, Cys198, and Cys201.

It belongs to the QueC family. Homodimer. Zn(2+) serves as cofactor.

It catalyses the reaction 7-carboxy-7-deazaguanine + NH4(+) + ATP = 7-cyano-7-deazaguanine + ADP + phosphate + H2O + H(+). The protein operates within purine metabolism; 7-cyano-7-deazaguanine biosynthesis. Functionally, catalyzes the ATP-dependent conversion of 7-carboxy-7-deazaguanine (CDG) to 7-cyano-7-deazaguanine (preQ(0)). This chain is 7-cyano-7-deazaguanine synthase, found in Exiguobacterium sibiricum (strain DSM 17290 / CCUG 55495 / CIP 109462 / JCM 13490 / 255-15).